The sequence spans 350 residues: Anthranilate phosphoribosyltransferase (350 aa).

5-phospho-alpha-D-ribose 1-diphosphate-binding positions include G94, 97 to 98 (GD), T102, 104 to 107 (NIST), 122 to 130 (KHGNRAVSS), and S134. G94 lines the anthranilate pocket. Position 106 (S106) interacts with Mg(2+). N125 lines the anthranilate pocket. R180 contributes to the anthranilate binding site. The Mg(2+) site is built by D239 and E240.

The protein belongs to the anthranilate phosphoribosyltransferase family. In terms of assembly, homodimer. Mg(2+) serves as cofactor.

The catalysed reaction is N-(5-phospho-beta-D-ribosyl)anthranilate + diphosphate = 5-phospho-alpha-D-ribose 1-diphosphate + anthranilate. Its pathway is amino-acid biosynthesis; L-tryptophan biosynthesis; L-tryptophan from chorismate: step 2/5. Its function is as follows. Catalyzes the transfer of the phosphoribosyl group of 5-phosphorylribose-1-pyrophosphate (PRPP) to anthranilate to yield N-(5'-phosphoribosyl)-anthranilate (PRA). This Geobacter sulfurreducens (strain ATCC 51573 / DSM 12127 / PCA) protein is Anthranilate phosphoribosyltransferase.